A 337-amino-acid chain; its full sequence is Ferrochelatase (337 aa).

Residues histidine 189 and glutamate 293 each coordinate Fe cation.

This sequence belongs to the ferrochelatase family.

It is found in the cytoplasm. It carries out the reaction heme b + 2 H(+) = protoporphyrin IX + Fe(2+). Its pathway is porphyrin-containing compound metabolism; protoheme biosynthesis; protoheme from protoporphyrin-IX: step 1/1. Functionally, catalyzes the ferrous insertion into protoporphyrin IX. The protein is Ferrochelatase of Pseudomonas entomophila (strain L48).